Reading from the N-terminus, the 491-residue chain is Glutamate--tRNA ligase (491 aa).

The 'HIGH' region signature appears at 9–19 (PSPTGTPHVGM). Positions 253–257 (KLSKR) match the 'KMSKS' region motif. Residue Lys256 participates in ATP binding.

The protein belongs to the class-I aminoacyl-tRNA synthetase family. Glutamate--tRNA ligase type 1 subfamily. In terms of assembly, monomer.

The protein resides in the cytoplasm. It carries out the reaction tRNA(Glu) + L-glutamate + ATP = L-glutamyl-tRNA(Glu) + AMP + diphosphate. Functionally, catalyzes the attachment of glutamate to tRNA(Glu) in a two-step reaction: glutamate is first activated by ATP to form Glu-AMP and then transferred to the acceptor end of tRNA(Glu). This is Glutamate--tRNA ligase from Leifsonia xyli subsp. xyli (strain CTCB07).